Here is a 430-residue protein sequence, read N- to C-terminus: Probable dual-specificity RNA methyltransferase RlmN (430 aa).

Glutamate 125 functions as the Proton acceptor in the catalytic mechanism. Residues 152-395 (RHGRVTLCVS…VTVRDTRGRE (244 aa)) form the Radical SAM core domain. A disulfide bridge connects residues cysteine 159 and cysteine 400. Residues cysteine 166, cysteine 170, and cysteine 173 each contribute to the [4Fe-4S] cluster site. S-adenosyl-L-methionine contacts are provided by residues 221 to 222 (GE), serine 255, 278 to 280 (SLH), and asparagine 357. The active-site S-methylcysteine intermediate is cysteine 400.

The protein belongs to the radical SAM superfamily. RlmN family. [4Fe-4S] cluster is required as a cofactor.

Its subcellular location is the cytoplasm. The catalysed reaction is adenosine(2503) in 23S rRNA + 2 reduced [2Fe-2S]-[ferredoxin] + 2 S-adenosyl-L-methionine = 2-methyladenosine(2503) in 23S rRNA + 5'-deoxyadenosine + L-methionine + 2 oxidized [2Fe-2S]-[ferredoxin] + S-adenosyl-L-homocysteine. It carries out the reaction adenosine(37) in tRNA + 2 reduced [2Fe-2S]-[ferredoxin] + 2 S-adenosyl-L-methionine = 2-methyladenosine(37) in tRNA + 5'-deoxyadenosine + L-methionine + 2 oxidized [2Fe-2S]-[ferredoxin] + S-adenosyl-L-homocysteine. Functionally, specifically methylates position 2 of adenine 2503 in 23S rRNA and position 2 of adenine 37 in tRNAs. This chain is Probable dual-specificity RNA methyltransferase RlmN, found in Acidothermus cellulolyticus (strain ATCC 43068 / DSM 8971 / 11B).